We begin with the raw amino-acid sequence, 149 residues long: Nucleoside diphosphate kinase (149 aa).

ATP contacts are provided by lysine 9, phenylalanine 57, arginine 85, threonine 91, arginine 102, and asparagine 112. Catalysis depends on histidine 115, which acts as the Pros-phosphohistidine intermediate.

It belongs to the NDK family. As to quaternary structure, homotetramer. It depends on Mg(2+) as a cofactor.

Its subcellular location is the cytoplasm. The enzyme catalyses a 2'-deoxyribonucleoside 5'-diphosphate + ATP = a 2'-deoxyribonucleoside 5'-triphosphate + ADP. It carries out the reaction a ribonucleoside 5'-diphosphate + ATP = a ribonucleoside 5'-triphosphate + ADP. Functionally, major role in the synthesis of nucleoside triphosphates other than ATP. The ATP gamma phosphate is transferred to the NDP beta phosphate via a ping-pong mechanism, using a phosphorylated active-site intermediate. This Nostoc sp. (strain PCC 7120 / SAG 25.82 / UTEX 2576) protein is Nucleoside diphosphate kinase.